The sequence spans 470 residues: ATP synthase subunit beta (470 aa).

158–165 (GGAGVGKT) is a binding site for ATP.

It belongs to the ATPase alpha/beta chains family. In terms of assembly, F-type ATPases have 2 components, CF(1) - the catalytic core - and CF(0) - the membrane proton channel. CF(1) has five subunits: alpha(3), beta(3), gamma(1), delta(1), epsilon(1). CF(0) has three main subunits: a(1), b(2) and c(9-12). The alpha and beta chains form an alternating ring which encloses part of the gamma chain. CF(1) is attached to CF(0) by a central stalk formed by the gamma and epsilon chains, while a peripheral stalk is formed by the delta and b chains.

The protein resides in the cell membrane. The enzyme catalyses ATP + H2O + 4 H(+)(in) = ADP + phosphate + 5 H(+)(out). In terms of biological role, produces ATP from ADP in the presence of a proton gradient across the membrane. The catalytic sites are hosted primarily by the beta subunits. The sequence is that of ATP synthase subunit beta from Alkalihalophilus pseudofirmus (strain ATCC BAA-2126 / JCM 17055 / OF4) (Bacillus pseudofirmus).